Reading from the N-terminus, the 684-residue chain is DNA ligase (684 aa).

NAD(+)-binding positions include 34 to 38 (DFQYD), 83 to 84 (SL), and glutamate 117. Lysine 119 (N6-AMP-lysine intermediate) is an active-site residue. 4 residues coordinate NAD(+): arginine 140, glutamate 186, lysine 300, and lysine 324. Zn(2+)-binding residues include cysteine 418, cysteine 421, cysteine 436, and cysteine 442. Positions 601-684 (PVNLNFDGMK…EMLGEVGSNE (84 aa)) constitute a BRCT domain.

Belongs to the NAD-dependent DNA ligase family. LigA subfamily. Mg(2+) serves as cofactor. Mn(2+) is required as a cofactor.

The enzyme catalyses NAD(+) + (deoxyribonucleotide)n-3'-hydroxyl + 5'-phospho-(deoxyribonucleotide)m = (deoxyribonucleotide)n+m + AMP + beta-nicotinamide D-nucleotide.. Its function is as follows. DNA ligase that catalyzes the formation of phosphodiester linkages between 5'-phosphoryl and 3'-hydroxyl groups in double-stranded DNA using NAD as a coenzyme and as the energy source for the reaction. It is essential for DNA replication and repair of damaged DNA. This is DNA ligase from Chlorobium phaeobacteroides (strain BS1).